Reading from the N-terminus, the 196-residue chain is uncharacterized protein (196 aa).

Residues 122-135 (SEIEKKQEPIERKT) show a composition bias toward basic and acidic residues. The segment at 122–150 (SEIEKKQEPIERKTSTTTNTESNQEKPLR) is disordered.

This is an uncharacterized protein from Leptospira interrogans.